We begin with the raw amino-acid sequence, 492 residues long: GDP-fucose protein O-fucosyltransferase 4 (492 aa).

Topologically, residues 1-7 are cytoplasmic; it reads MAAGPIR. The helical; Signal-anchor for type II membrane protein transmembrane segment at 8 to 24 threads the bilayer; it reads VVLVLLGVLSVCAASGH. Over 25-492 the chain is Lumenal; the sequence is GSVAEREAGG…HEIFMKRQHL (468 aa). Asparagine 166 carries N-linked (GlcNAc...) asparagine glycosylation. Cysteine 389 and cysteine 392 are joined by a disulfide. N-linked (GlcNAc...) asparagine glycosylation is present at asparagine 443.

This sequence belongs to the glycosyltransferase 10 family.

Its subcellular location is the endoplasmic reticulum membrane. The catalysed reaction is L-threonyl-[protein] + GDP-beta-L-fucose = 3-O-(alpha-L-fucosyl)-L-threonyl-[protein] + GDP + H(+). It carries out the reaction L-seryl-[protein] + GDP-beta-L-fucose = 3-O-(alpha-L-fucosyl)-L-seryl-[protein] + GDP + H(+). Its pathway is protein modification; protein glycosylation. Its function is as follows. Protein O-fucosyltransferase that specifically catalyzes O-fucosylation of serine or threonine residues in EMI domains of target proteins, such as MMRN1, MMRN2 and EMID1. Attaches fucose through an O-glycosidic linkage. O-fucosylation of EMI domain-containing proteins may be required for facilitating protein folding and secretion. Also shows minor alpha-(1,3)-fucosyltransferase activity toward activity toward biantennary N-glycan acceptors. However, this was tested with a library of synthetic substrates and this activity is unsure in vivo. In Homo sapiens (Human), this protein is GDP-fucose protein O-fucosyltransferase 4.